An 89-amino-acid chain; its full sequence is MAHKKAGGSSRNGRDSKGKRLGIKAFGGEVVIPGNIIARQRGTTWHPGLNVGMGTDHTLFAKIEGRVTFQAKANGRTFVSVLPIAEAAE.

The disordered stretch occupies residues 1 to 21; sequence MAHKKAGGSSRNGRDSKGKRL.

Belongs to the bacterial ribosomal protein bL27 family.

The chain is Large ribosomal subunit protein bL27 from Bradyrhizobium diazoefficiens (strain JCM 10833 / BCRC 13528 / IAM 13628 / NBRC 14792 / USDA 110).